The chain runs to 319 residues: 33 kDa chaperonin (319 aa).

Basic and acidic residues predominate over residues 1–10 (MTDASGSERL). A disordered region spans residues 1–25 (MTDASGSERLKRAKGISEGTPSSLP). Intrachain disulfides connect cysteine 261–cysteine 263 and cysteine 294–cysteine 297.

Belongs to the HSP33 family. Under oxidizing conditions two disulfide bonds are formed involving the reactive cysteines. Under reducing conditions zinc is bound to the reactive cysteines and the protein is inactive.

It localises to the cytoplasm. Its function is as follows. Redox regulated molecular chaperone. Protects both thermally unfolding and oxidatively damaged proteins from irreversible aggregation. Plays an important role in the bacterial defense system toward oxidative stress. The sequence is that of 33 kDa chaperonin from Synechococcus sp. (strain JA-2-3B'a(2-13)) (Cyanobacteria bacterium Yellowstone B-Prime).